The sequence spans 479 residues: Ribosomal RNA small subunit methyltransferase F (479 aa).

Residues 125-131 (AAAPGSK), E149, D176, and D194 each bind S-adenosyl-L-methionine. Residue C247 is the Nucleophile of the active site.

Belongs to the class I-like SAM-binding methyltransferase superfamily. RsmB/NOP family.

The protein resides in the cytoplasm. The catalysed reaction is cytidine(1407) in 16S rRNA + S-adenosyl-L-methionine = 5-methylcytidine(1407) in 16S rRNA + S-adenosyl-L-homocysteine + H(+). Specifically methylates the cytosine at position 1407 (m5C1407) of 16S rRNA. This chain is Ribosomal RNA small subunit methyltransferase F, found in Escherichia coli O17:K52:H18 (strain UMN026 / ExPEC).